A 384-amino-acid chain; its full sequence is Glucans biosynthesis protein C (384 aa).

A run of 10 helical transmembrane segments spans residues 17–37 (AWLMLLGIPFHISLIYSTHSW), 54–74 (FIHAFRMQVFFVISGYFSYML), 91–111 (VGIPMLTAIPLLTLPQFILLQ), 140–160 (LWFLLVLVILTTVSIGIFTWF), 173–193 (AISLAKLSLIFFLLGVAYAAI), 212–232 (FIVMQTLFYVPFFILGALAFI), 240–260 (FTTPSRGCTLGAAVAFIAYLL), 274–294 (TESVITMVMGLWMVNVVFSLG), 311–331 (ASLFIYLVHHPLTLFFGAYIT), and 338–358 (LIGFLCGLIFVMGIALILYEI).

It belongs to the acyltransferase 3 family. OpgC subfamily.

The protein localises to the cell membrane. It functions in the pathway glycan metabolism; osmoregulated periplasmic glucan (OPG) biosynthesis. Functionally, necessary for the succinyl substitution of periplasmic glucans. Could catalyze the transfer of succinyl residues from the cytoplasmic side of the membrane to the nascent glucan backbones on the periplasmic side of the membrane. The sequence is that of Glucans biosynthesis protein C from Salmonella typhimurium (strain LT2 / SGSC1412 / ATCC 700720).